The sequence spans 74 residues: Protein SlyX homolog (74 aa).

Residues 52 to 74 (LKQMQENQSTDSDPADEPPPPHY) are disordered.

The protein belongs to the SlyX family.

This chain is Protein SlyX homolog, found in Idiomarina loihiensis (strain ATCC BAA-735 / DSM 15497 / L2-TR).